We begin with the raw amino-acid sequence, 142 residues long: Hemoglobin A subunit alpha-1 (142 aa).

The Globin domain occupies 2–142 (VLTAGDKANV…VATALTSKYR (141 aa)). His-59 is a binding site for O2. Position 88 (His-88) interacts with heme b.

Belongs to the globin family. In terms of assembly, tetramer of alpha-1, alpha-2 and two identical beta chains. In terms of tissue distribution, red blood cells.

Involved in oxygen transport from the lung to the various peripheral tissues. This Aldabrachelys gigantea (Aldabra giant tortoise) protein is Hemoglobin A subunit alpha-1.